Here is a 458-residue protein sequence, read N- to C-terminus: UDP-N-acetylglucosamine 1-carboxyvinyltransferase (458 aa).

34–35 provides a ligand contact to phosphoenolpyruvate; sequence KN. Residue arginine 104 coordinates UDP-N-acetyl-alpha-D-glucosamine. The Proton donor role is filled by cysteine 128. Residue cysteine 128 is modified to 2-(S-cysteinyl)pyruvic acid O-phosphothioketal. UDP-N-acetyl-alpha-D-glucosamine is bound by residues aspartate 320 and valine 342.

This sequence belongs to the EPSP synthase family. MurA subfamily.

It is found in the cytoplasm. The enzyme catalyses phosphoenolpyruvate + UDP-N-acetyl-alpha-D-glucosamine = UDP-N-acetyl-3-O-(1-carboxyvinyl)-alpha-D-glucosamine + phosphate. Its pathway is cell wall biogenesis; peptidoglycan biosynthesis. Functionally, cell wall formation. Adds enolpyruvyl to UDP-N-acetylglucosamine. The protein is UDP-N-acetylglucosamine 1-carboxyvinyltransferase of Prochlorococcus marinus (strain NATL1A).